The sequence spans 118 residues: Large ribosomal subunit protein uL18 (118 aa).

Belongs to the universal ribosomal protein uL18 family. In terms of assembly, part of the 50S ribosomal subunit; part of the 5S rRNA/L5/L18/L25 subcomplex. Contacts the 5S and 23S rRNAs.

Its function is as follows. This is one of the proteins that bind and probably mediate the attachment of the 5S RNA into the large ribosomal subunit, where it forms part of the central protuberance. This is Large ribosomal subunit protein uL18 from Limosilactobacillus reuteri (strain DSM 20016) (Lactobacillus reuteri).